The chain runs to 256 residues: Acidic leucine-rich nuclear phosphoprotein 32 family member E (256 aa).

LRR repeat units follow at residues 43–64, 65–87, and 89–110; these read ELEF…PTLS, KLRK…AERC, and NLTY…EALQ. The region spanning 123–161 is the LRRCT domain; the sequence is CEITNLEDYRDSIFDLLQQITYLDGFDQEDNEAPDSEDD. A disordered region spans residues 147-256; sequence GFDQEDNEAP…PEDEGEEEDD (110 aa). 2 stretches are compositionally biased toward acidic residues: residues 148–205 and 215–235; these read FDQE…EEEV and IQDE…EEEA. Residues 204 to 256 are ZID domain; sequence EVGLSYLMKEEIQDEDDDDDYVEEGGDEEEEAEGIRGEKRKRDPEDEGEEEDD. The segment covering 236–247 has biased composition (basic and acidic residues); the sequence is EGIRGEKRKRDP.

Belongs to the ANP32 family. Component of a SWR1-like complex. Interacts with H2A.Z/H2AZ1.

The protein localises to the cytoplasm. The protein resides in the nucleus. Functionally, histone chaperone that specifically mediates the genome-wide removal of histone H2A.Z/H2AZ1 from the nucleosome: removes H2A.Z/H2AZ1 from its normal sites of deposition, especially from enhancer and insulator regions. Not involved in deposition of H2A.Z/H2AZ1 in the nucleosome. May stabilize the evicted H2A.Z/H2AZ1-H2B dimer, thus shifting the equilibrium towards dissociation and the off-chromatin state. Inhibits activity of protein phosphatase 2A (PP2A). Does not inhibit protein phosphatase 1. May play a role in cerebellar development and synaptogenesis. This chain is Acidic leucine-rich nuclear phosphoprotein 32 family member E (ANP32E), found in Gallus gallus (Chicken).